The following is a 110-amino-acid chain: UPF0145 protein LMOf2365_0219 (110 aa).

This sequence belongs to the UPF0145 family.

This is UPF0145 protein LMOf2365_0219 from Listeria monocytogenes serotype 4b (strain F2365).